The primary structure comprises 441 residues: Maltose-6'-phosphate glucosidase MalH (441 aa).

4 to 70 (FSVVIAGGGS…PEIEFLATTN (67 aa)) contacts NAD(+). Positions 93 and 147 each coordinate substrate. Cys-169 lines the Mn(2+) pocket. The active-site Proton donor is Asp-170. Mn(2+) is bound at residue His-200. Tyr-264 serves as the catalytic Proton acceptor. Arg-284 provides a ligand contact to substrate.

Homotetramer. The cofactor is NAD(+). It depends on Mn(2+) as a cofactor.

The enzyme catalyses alpha-maltose 6'-phosphate + H2O = D-glucose 6-phosphate + D-glucose. Functionally, catalyzes the hydrolysis of O-alpha-linked disaccharide 6-phosphates, including maltose-6'P and all five phosphorylated isomers of sucrose, but not sucrose-6P. Does not hydrolyze beta-linked disaccharide 6-phosphates such as cellobiose-6'P and gentiobiose-6'P. Is involved in the dissimilation of maltose and related O-alpha-linked glucosides produced via the phosphoenolpyruvate-dependent sugar phosphotransferase system (PEP-PTS). The protein is Maltose-6'-phosphate glucosidase MalH (malH) of Clostridium acetobutylicum (strain ATCC 824 / DSM 792 / JCM 1419 / IAM 19013 / LMG 5710 / NBRC 13948 / NRRL B-527 / VKM B-1787 / 2291 / W).